Reading from the N-terminus, the 247-residue chain is Cytochrome c oxidase subunit 2 (247 aa).

Topologically, residues 12-38 (DVPTPWGLYFQDSSTPNQEGIIELHDN) are mitochondrial intermembrane. Residues 39-59 (IMFYLVLILCTVSWLLFSIVK) form a helical membrane-spanning segment. Residues 60 to 78 (DSSKNPLPHKYLVHGQTIE) are Mitochondrial matrix-facing. Residues 79-101 (IIWTILPAVVLLIIAFPSFILLY) form a helical membrane-spanning segment. Residues 102–247 (LCDEVISPAM…KEFLTWLNEQ (146 aa)) lie on the Mitochondrial intermembrane side of the membrane. Positions 182, 217, 219, 221, 225, and 228 each coordinate Cu cation. E219 is a Mg(2+) binding site.

The protein belongs to the cytochrome c oxidase subunit 2 family. In terms of assembly, component of the cytochrome c oxidase (complex IV, CIV), a multisubunit enzyme composed of a catalytic core of 3 subunits and several supernumerary subunits. The complex exists as a monomer or a dimer and forms supercomplexes (SCs) in the inner mitochondrial membrane with ubiquinol-cytochrome c oxidoreductase (cytochrome b-c1 complex, complex III, CIII). The cofactor is Cu cation. In terms of processing, the signal sequence of COX2 is processed by IMP1.

It is found in the mitochondrion inner membrane. It catalyses the reaction 4 Fe(II)-[cytochrome c] + O2 + 8 H(+)(in) = 4 Fe(III)-[cytochrome c] + 2 H2O + 4 H(+)(out). Functionally, component of the cytochrome c oxidase, the last enzyme in the mitochondrial electron transport chain which drives oxidative phosphorylation. The respiratory chain contains 3 multisubunit complexes succinate dehydrogenase (complex II, CII), ubiquinol-cytochrome c oxidoreductase (cytochrome b-c1 complex, complex III, CIII) and cytochrome c oxidase (complex IV, CIV), that cooperate to transfer electrons derived from NADH and succinate to molecular oxygen, creating an electrochemical gradient over the inner membrane that drives transmembrane transport and the ATP synthase. Cytochrome c oxidase is the component of the respiratory chain that catalyzes the reduction of oxygen to water. Electrons originating from reduced cytochrome c in the intermembrane space (IMS) are transferred via the dinuclear copper A center (CU(A)) of subunit 2 and heme A of subunit 1 to the active site in subunit 1, a binuclear center (BNC) formed by heme A3 and copper B (CU(B)). The BNC reduces molecular oxygen to 2 water molecules using 4 electrons from cytochrome c in the IMS and 4 protons from the mitochondrial matrix. The chain is Cytochrome c oxidase subunit 2 (COX2) from Cyberlindnera saturnus (Yeast).